A 761-amino-acid chain; its full sequence is uncharacterized protein (761 aa).

8 TPR repeats span residues 35 to 68, 69 to 102, 103 to 136, 137 to 170, 172 to 203, 204 to 237, 351 to 384, and 419 to 452; these read EEGK…SLNS, AQGL…SDVD, DALY…NPNK, VEIL…KPDF, EAEE…KNPN, EEVY…FPHD, LGVL…NPSA, and ASAG…VKEE. A protein sulfotransferase-like region spans residues 487-761; sequence KRPIFVLGMP…PKGLVGYTVG (275 aa).

It in the C-terminal section; belongs to the protein sulfotransferase family.

This is an uncharacterized protein from Aquifex aeolicus (strain VF5).